The sequence spans 321 residues: Collectin-43 (321 aa).

The N-terminal stretch at 1-20 is a signal peptide; it reads MLPLPLSILLLLTQSQSFLG. A disordered region spans residues 43–163; that stretch reads PADSLRGHDG…GEKGARGETS (121 aa). Positions 47–65 are enriched in basic and acidic residues; the sequence is LRGHDGRDGKEGPQGEKGD. In terms of domain architecture, Collagen-like spans 49–162; that stretch reads GHDGRDGKEG…PGEKGARGET (114 aa). 2 stretches are compositionally biased toward gly residues: residues 100-109 and 124-133; these read GPEGGVGAPG and GTPGPGGAIG. Over residues 147–159 the composition is skewed to basic and acidic residues; the sequence is KGDRGDPGEKGAR. The C-type lectin domain occupies 222–321; that stretch reads QLCREAKGQL…REERLVICEF (100 aa). 2 cysteine pairs are disulfide-bonded: cysteine 224–cysteine 319 and cysteine 297–cysteine 311.

Belongs to the SFTPD family. As to quaternary structure, oligomeric complex of 4 set of homotrimers. Hydroxylated. In terms of tissue distribution, liver specific.

It localises to the secreted. Its function is as follows. Lectin that binds to various sugars: mannose = ManNAc &gt; fucose &gt; GlcNAc &gt; glucose = maltose &gt; galactose &gt; lactose &gt; GalNAc. Could play a role in immune defense. The protein is Collectin-43 (CL43) of Bos taurus (Bovine).